We begin with the raw amino-acid sequence, 339 residues long: tRNA N6-adenosine threonylcarbamoyltransferase (339 aa).

Fe cation-binding residues include His-114 and His-118. Residues 137-141 (VVSGG), Asp-170, Gly-183, Asp-187, and Asn-277 each bind substrate. Residue Asp-305 participates in Fe cation binding.

This sequence belongs to the KAE1 / TsaD family. The cofactor is Fe(2+).

It localises to the cytoplasm. It carries out the reaction L-threonylcarbamoyladenylate + adenosine(37) in tRNA = N(6)-L-threonylcarbamoyladenosine(37) in tRNA + AMP + H(+). Its function is as follows. Required for the formation of a threonylcarbamoyl group on adenosine at position 37 (t(6)A37) in tRNAs that read codons beginning with adenine. Is involved in the transfer of the threonylcarbamoyl moiety of threonylcarbamoyl-AMP (TC-AMP) to the N6 group of A37, together with TsaE and TsaB. TsaD likely plays a direct catalytic role in this reaction. The chain is tRNA N6-adenosine threonylcarbamoyltransferase from Clostridium perfringens (strain SM101 / Type A).